Here is a 421-residue protein sequence, read N- to C-terminus: Ankyrin repeat and SOCS box protein 6 (421 aa).

6 ANK repeats span residues Glu-67 to Phe-97, Thr-102 to Arg-131, His-136 to Ala-166, His-170 to Ala-205, Gly-226 to Glu-255, and Glu-260 to Cys-289. Residues Ala-360–Gly-415 form the SOCS box domain.

The protein belongs to the ankyrin SOCS box (ASB) family. Binds APS. Identified in a complex with ELOB and ELOC. Interacts with CUL5 and RNF7. Interacts with SQSTM1. Ubiquitinated by RNF41; leading to proteasomal degradation.

It localises to the cytoplasm. Its pathway is protein modification; protein ubiquitination. Functionally, probable substrate-recognition component of a SCF-like ECS (Elongin-Cullin-SOCS-box protein) E3 ubiquitin-protein ligase complex which mediates the ubiquitination and subsequent proteasomal degradation of target proteins. May play a role in the regulation of cell proliferation and autophagy by promoting the ubiquitination and degradation of SQSTM1. This is Ankyrin repeat and SOCS box protein 6 (ASB6) from Homo sapiens (Human).